Consider the following 136-residue polypeptide: Cytochrome c-550 (136 aa).

Positions 1–28 are cleaved as a signal peptide; sequence MTKLTFGALVALAMTAAASTAMSSKAMA. Heme c contacts are provided by Cys41, Cys44, His45, and Met107.

In terms of processing, binds 1 heme c group covalently per subunit. The N-terminus is blocked.

It is found in the periplasm. Plays a role in bacteroid respiration under conditions of oxygen limitation. Required for electron-transfer during denitrification. The chain is Cytochrome c-550 (cycA) from Bradyrhizobium diazoefficiens (strain JCM 10833 / BCRC 13528 / IAM 13628 / NBRC 14792 / USDA 110).